Consider the following 252-residue polypeptide: ATP synthase subunit a (252 aa).

Transmembrane regions (helical) follow at residues 29–49 (FTNV…FLFI), 87–107 (FFPL…IGLF), 117–137 (IMIT…CGFY), 146–166 (LFVP…IEVI), 196–216 (FIVS…LPLI), and 219–239 (VAIT…FTVL).

The protein belongs to the ATPase A chain family. As to quaternary structure, F-type ATPases have 2 components, CF(1) - the catalytic core - and CF(0) - the membrane proton channel. CF(1) has five subunits: alpha(3), beta(3), gamma(1), delta(1), epsilon(1). CF(0) has three main subunits: a(1), b(2) and c(9-12). The alpha and beta chains form an alternating ring which encloses part of the gamma chain. CF(1) is attached to CF(0) by a central stalk formed by the gamma and epsilon chains, while a peripheral stalk is formed by the delta and b chains.

It is found in the cell inner membrane. Its function is as follows. Key component of the proton channel; it plays a direct role in the translocation of protons across the membrane. The sequence is that of ATP synthase subunit a from Bartonella bacilliformis (strain ATCC 35685 / KC583 / Herrer 020/F12,63).